Here is a 452-residue protein sequence, read N- to C-terminus: Bone morphogenetic protein 5 (452 aa).

The first 25 residues, 1–25 (MHWTVFLLRGIVGFLWSGWVQVGYA), serve as a signal peptide directing secretion. Residues 26–314 (KGGLGDNHVH…ASEVLLRSVR (289 aa)) constitute a propeptide that is removed on maturation. N-linked (GlcNAc...) asparagine glycosylation is found at Asn209, Asn325, Asn343, and Asn393. Positions 316 to 345 (ASKRKNQNRNKSNSHQDPSRMPSAGDYNTS) are disordered. Cystine bridges form between Cys351-Cys417, Cys380-Cys449, and Cys384-Cys451.

Belongs to the TGF-beta family. In terms of assembly, interacts with ERFE; the interaction inhibits BMP-induced transcription of HAMP.

It is found in the secreted. Growth factor of the TGF-beta superfamily that plays essential roles in many developmental processes, including cartilage and bone formation or neurogenesis. Initiates the canonical BMP signaling cascade by associating with type I receptor BMPR1A and type II receptor BMPR2. In turn, BMPR1A propagates signal by phosphorylating SMAD1/5/8 that travel to the nucleus and act as activators and repressors of transcription of target genes. Can also signal through non-canonical pathway such as MAPK p38 signaling cascade to promote chondrogenic differentiation. Promotes the expression of HAMP, this is repressed by its interaction with ERFE. In Mus musculus (Mouse), this protein is Bone morphogenetic protein 5 (Bmp5).